Reading from the N-terminus, the 1043-residue chain is Peroxisomal ATPase PEX1 (1043 aa).

Positions Ala453–Arg626 are AAA-cassette D1. ATP-binding positions include Gly461 to Thr468 and Gly738 to Thr745. Positions Gly733–His926 are AAA-cassette D2.

Belongs to the AAA ATPase family. As to quaternary structure, interacts with PEX6; forming the PEX1-PEX6 AAA ATPase complex, which is composed of a heterohexamer formed by a trimer of PEX1-PEX6 dimers. The PEX1-PEX6 heterooligomers associate with the peroxisomal importomer via interaction of PEX6 with the peroxisomal membrane anchor PEX15.

The protein localises to the cytoplasm. The protein resides in the cytosol. It is found in the peroxisome membrane. The catalysed reaction is ATP + H2O = ADP + phosphate + H(+). Functionally, component of the PEX1-PEX6 AAA ATPase complex, a protein dislocase complex that mediates the ATP-dependent extraction of the PEX5 receptor from peroxisomal membranes, an essential step for PEX5 recycling. Specifically recognizes PEX5 monoubiquitinated at 'Cys-6', and pulls it out of the peroxisome lumen through the PEX2-PEX10-PEX12 retrotranslocation channel. Extraction by the PEX1-PEX6 AAA ATPase complex is accompanied by unfolding of the TPR repeats and release of bound cargo from PEX5. The sequence is that of Peroxisomal ATPase PEX1 from Saccharomyces cerevisiae (strain ATCC 204508 / S288c) (Baker's yeast).